A 461-amino-acid chain; its full sequence is Argininosuccinate lyase (461 aa).

The protein belongs to the lyase 1 family. Argininosuccinate lyase subfamily.

The protein localises to the cytoplasm. The catalysed reaction is 2-(N(omega)-L-arginino)succinate = fumarate + L-arginine. It participates in amino-acid biosynthesis; L-arginine biosynthesis; L-arginine from L-ornithine and carbamoyl phosphate: step 3/3. The polypeptide is Argininosuccinate lyase (Symbiobacterium thermophilum (strain DSM 24528 / JCM 14929 / IAM 14863 / T)).